The sequence spans 311 residues: Ribosomal protein L11 methyltransferase (311 aa).

S-adenosyl-L-methionine contacts are provided by Thr162, Gly183, Asp205, and Asn248.

It belongs to the methyltransferase superfamily. PrmA family.

The protein localises to the cytoplasm. The enzyme catalyses L-lysyl-[protein] + 3 S-adenosyl-L-methionine = N(6),N(6),N(6)-trimethyl-L-lysyl-[protein] + 3 S-adenosyl-L-homocysteine + 3 H(+). Methylates ribosomal protein L11. The chain is Ribosomal protein L11 methyltransferase from Bacillus subtilis (strain 168).